Consider the following 466-residue polypeptide: Hepatocyte nuclear factor 3-alpha (466 aa).

A DNA-binding region (fork-head) is located at residues 169–260 (AKPPYSYISL…GNMFENGCYL (92 aa)). Residues 251–288 (GNMFENGCYLRRQKRFKCEKQPGAGGGSGGGGSKGVPE) are essential for DNA binding. The tract at residues 269-358 (EKQPGAGGGS…ASSSAPPISS (90 aa)) is disordered. Positions 273–284 (GAGGGSGGGGSK) are enriched in gly residues. Ser303 and Ser327 each carry phosphoserine. Composition is skewed to low complexity over residues 318–328 (GAPAPGPAASP) and 344–358 (ELKS…PISS).

In terms of assembly, binds DNA as a monomer. Interacts with FOXA2. Interacts with NKX2-1. Interacts with HDAC7. Interacts with the histone H3-H4 heterodimer. Associates with nucleosomes containing histone H2A. Interacts with AR. Interacts with NR0B2. In terms of tissue distribution, liver.

The protein localises to the nucleus. Transcription factor that is involved in embryonic development, establishment of tissue-specific gene expression and regulation of gene expression in differentiated tissues. Is thought to act as a 'pioneer' factor opening the compacted chromatin for other proteins through interactions with nucleosomal core histones and thereby replacing linker histones at target enhancer and/or promoter sites. Binds DNA with the consensus sequence 5'-[AC]A[AT]T[AG]TT[GT][AG][CT]T[CT]-3'. Proposed to play a role in translating the epigenetic signatures into cell type-specific enhancer-driven transcriptional programs. Involved in glucose homeostasis; activates the GCG promoter. Involved in the development of multiple endoderm-derived organ systems such as the liver, pancreas, lungs and prostate; FOXA1 and FOXA2 seem to have at least in part redundant roles. Modulates the transcriptional activity of nuclear hormone receptors. Is required for maximal gene activation mediated by AR in the prostate. Negatively regulates AR transactivation via competition with coactivators such as NCOA2. Is involved in ESR1-mediated transcription. Involved in regulation of apoptosis. Involved in cell cycle regulation. Originally described as a transcription activator for a number of liver genes such as AFP, albumin, tyrosine aminotransferase, PEPCK, etc. Interacts with the cis-acting regulatory regions of these genes. This is Hepatocyte nuclear factor 3-alpha (Foxa1) from Rattus norvegicus (Rat).